Reading from the N-terminus, the 37-residue chain is MKVRASVKKICRNCKIIKRSGVVRVICVEPKHKQRQG.

Belongs to the bacterial ribosomal protein bL36 family.

The chain is Large ribosomal subunit protein bL36 from Shewanella woodyi (strain ATCC 51908 / MS32).